Consider the following 390-residue polypeptide: Homeobox protein Hox-B2a (390 aa).

Disordered stretches follow at residues 40-73 (STAIPPPFEHTIPSLSPCTGNQARPRSQKRTASN), 81-100 (TAPPTQHQQGPAPLSGGAPL), 108-155 (KEKK…LDNV), and 211-338 (MKHK…SLPD). Residues 52–73 (PSLSPCTGNQARPRSQKRTASN) show a composition bias toward polar residues. Residues 103–108 (EFPWMK) carry the Antp-type hexapeptide motif. Residues 118–135 (KPGATAAAAAASPSQASS) show a composition bias toward low complexity. The segment at residues 158-217 (SRRLRTAYTNTQLLELEKEFHFNKYLCRPRRVEIAALLDLTERQVKVWFQNRRMKHKRQT) is a DNA-binding region (homeobox). Positions 244–262 (SSQSLEVSGSGSAAPSESE) are enriched in low complexity. The span at 263-290 (TCPTTAAYTNSSDKSQPTPEEGQASQPE) shows a compositional bias: polar residues.

It belongs to the Antp homeobox family. Proboscipedia subfamily.

It localises to the nucleus. Its function is as follows. Sequence-specific transcription factor which is part of a developmental regulatory system that provides cells with specific positional identities on the anterior-posterior axis. Plays an important role in the patterning of hindbrain and pharyngeal arches. This is Homeobox protein Hox-B2a (hoxb2a) from Danio rerio (Zebrafish).